Here is a 128-residue protein sequence, read N- to C-terminus: Flagellar hook-basal body complex protein FliE (128 aa).

The disordered stretch occupies residues 1–60; it reads MRPVASFRPPPTFSALQGGASSQATKTAGIDQRGTNQAFSLLDPQSTQSNSTDSSFGEMG. A compositionally biased stretch (polar residues) spans 33–55; that stretch reads RGTNQAFSLLDPQSTQSNSTDSS.

This sequence belongs to the FliE family.

It is found in the bacterial flagellum basal body. The polypeptide is Flagellar hook-basal body complex protein FliE (Rhodopirellula baltica (strain DSM 10527 / NCIMB 13988 / SH1)).